A 424-amino-acid chain; its full sequence is Imidazolonepropionase (424 aa).

The Fe(3+) site is built by histidine 84 and histidine 86. Positions 84 and 86 each coordinate Zn(2+). 3 residues coordinate 4-imidazolone-5-propanoate: arginine 93, tyrosine 156, and histidine 189. N-formimidoyl-L-glutamate is bound at residue tyrosine 156. Fe(3+) is bound at residue histidine 254. Histidine 254 serves as a coordination point for Zn(2+). Glutamate 257 is a binding site for 4-imidazolone-5-propanoate. Aspartate 328 is a Fe(3+) binding site. Position 328 (aspartate 328) interacts with Zn(2+). Asparagine 330 and glycine 332 together coordinate N-formimidoyl-L-glutamate. A 4-imidazolone-5-propanoate-binding site is contributed by serine 333.

This sequence belongs to the metallo-dependent hydrolases superfamily. HutI family. Zn(2+) serves as cofactor. Fe(3+) is required as a cofactor.

Its subcellular location is the cytoplasm. The catalysed reaction is 4-imidazolone-5-propanoate + H2O = N-formimidoyl-L-glutamate. It participates in amino-acid degradation; L-histidine degradation into L-glutamate; N-formimidoyl-L-glutamate from L-histidine: step 3/3. Its function is as follows. Catalyzes the hydrolytic cleavage of the carbon-nitrogen bond in imidazolone-5-propanoate to yield N-formimidoyl-L-glutamate. It is the third step in the universal histidine degradation pathway. The chain is Imidazolonepropionase from Geobacillus sp. (strain WCH70).